The sequence spans 492 residues: Zinc finger protein GLIS2 (492 aa).

Residues 49 to 101 form a disordered region; the sequence is VITPICSSPPPGFRYRDGDSPPFSSPPIVDLSLSPPSGTDSPSRSSLSPDRAA. The segment at 69-129 is transcription activation; that stretch reads PPFSSPPIVD…SPFQFFLPLG (61 aa). Over residues 82–97 the composition is skewed to low complexity; it reads SPPSGTDSPSRSSLSP. Positions 138–161 are transcription repression; it reads MFMSPPKENRLSLEFTEQKQLVCQ. The C2H2-type 1 zinc finger occupies 158-183; that stretch reads LVCQWAKCNRLFELLQELVDHVNDFH. Residues 192–219 form a C2H2-type 2; degenerate zinc finger; it reads YCCHWEGCARRGRGFNARYKMLIHIRTH. 3 C2H2-type zinc fingers span residues 225 to 247, 253 to 277, and 283 to 307; these read HCCP…NRSH, YMCP…TRTH, and YYCK…IKAH. Residues 423–444 are compositionally biased toward basic and acidic residues; that stretch reads VENEKRPKGQRGDSSERTDGSK. The interval 423–450 is disordered; the sequence is VENEKRPKGQRGDSSERTDGSKLRPGSI.

The protein belongs to the GLI C2H2-type zinc-finger protein family.

It localises to the nucleus speckle. It is found in the cytoplasm. Functionally, can act either as a transcription repressor or as a transcription activator, depending on the cell context. May be involved in neuron differentiation. This is Zinc finger protein GLIS2 (glis2) from Xenopus laevis (African clawed frog).